The following is a 176-amino-acid chain: Cathelicidin-2 (176 aa).

A signal peptide spans 1–29 (METQGASLSLGRWSLWLLLLGLVLPSASA). A Pyrrolidone carboxylic acid modification is found at Gln-30. A propeptide spanning residues 30-130 (QALSYREAVL…DINCNELQSV (101 aa)) is cleaved from the precursor. 2 disulfides stabilise this stretch: Cys-85–Cys-96 and Cys-107–Cys-124. The tract at residues 135–176 (PIRRPPIRPPFRPPFRPPVRPPIRPPFRPPFRPPIGPFPGRR) is disordered. The segment covering 141 to 176 (IRPPFRPPFRPPVRPPIRPPFRPPFRPPIGPFPGRR) has biased composition (pro residues). A Proline amide modification is found at Pro-173. Positions 174 to 176 (GRR) are cleaved as a propeptide — removed in mature form.

Belongs to the cathelicidin family. In terms of processing, elastase is responsible for its maturation.

It is found in the secreted. Binds to the lipid A moiety of bacterial lipipolysaccharides (LPS), a glycolipid present in the outer membrane of all Gram-negative bacteria. Potent antimicrobial activity. The protein is Cathelicidin-2 (CATHL2) of Ovis aries (Sheep).